Here is a 318-residue protein sequence, read N- to C-terminus: ATP-dependent (S)-NAD(P)H-hydrate dehydratase (318 aa).

Positions A3 to L313 constitute a YjeF C-terminal domain. Residues G119 and N172 to R178 contribute to the (6S)-NADPHX site. ATP contacts are provided by residues K210–D214 and T229–G238. D239 is a (6S)-NADPHX binding site.

Belongs to the NnrD/CARKD family. Mg(2+) is required as a cofactor.

Its subcellular location is the cytoplasm. The enzyme catalyses (6S)-NADHX + ATP = ADP + phosphate + NADH + H(+). The catalysed reaction is (6S)-NADPHX + ATP = ADP + phosphate + NADPH + H(+). Functionally, catalyzes the dehydration of the S-form of NAD(P)HX at the expense of ATP, which is converted to ADP. Together with NAD(P)HX epimerase, which catalyzes the epimerization of the S- and R-forms, the enzyme allows the repair of both epimers of NAD(P)HX, a damaged form of NAD(P)H that is a result of enzymatic or heat-dependent hydration. This chain is ATP-dependent (S)-NAD(P)H-hydrate dehydratase, found in Batrachochytrium dendrobatidis (strain JAM81 / FGSC 10211) (Frog chytrid fungus).